A 1541-amino-acid polypeptide reads, in one-letter code: Multiple epidermal growth factor-like domains protein 6 (1541 aa).

Positions 1–30 (MSFLEEARAAGRAVVLALVLLLLPAVPVGA) are cleaved as a signal peptide. An EMI domain is found at 44-125 (MPHVCAEQEL…QQPDEEGCLS (82 aa)). 15 disulfides stabilise this stretch: cysteine 48/cysteine 111, cysteine 77/cysteine 83, cysteine 110/cysteine 123, cysteine 128/cysteine 139, cysteine 133/cysteine 147, cysteine 149/cysteine 158, cysteine 165/cysteine 176, cysteine 172/cysteine 185, cysteine 187/cysteine 200, cysteine 242/cysteine 255, cysteine 248/cysteine 268, cysteine 270/cysteine 283, cysteine 289/cysteine 300, cysteine 296/cysteine 309, and cysteine 311/cysteine 324. Residues 124 to 159 (LSAECSASLCFHGGRCVPGSAQPCHCPPGFQGPRCQ) enclose the EGF-like 1 domain. The region spanning 161–201 (DVDECRTHNGGCQHRCVNTPGSYLCECKPGFRLHTDSRTCL) is the EGF-like 2; calcium-binding domain. EGF-like domains follow at residues 206 to 242 (CALGNGGCQHHCVQLTITRHRCQCRPGFQLQEDGRHC) and 238 to 284 (DGRH…KACE). An N-linked (GlcNAc...) asparagine glycan is attached at asparagine 252. The EGF-like 5; calcium-binding domain maps to 285 to 325 (DVDECAAGLAQCAHGCLNTQGSFKCVCHAGYELGADGRQCY). EGF-like domains follow at residues 335–370 (CEANNGGCSHGCSHTSAGPLCTCPRGYELDTDQRTC) and 375–411 (DCADSPCCQQVCTNNPGGYECGCYAGYRLSADGCGCE). An EGF-like 8; calcium-binding domain is found at 412–452 (DVDECASSRGGCEHHCTNLAGSFQCSCEAGYRLHEDRRGCS). 12 disulfide bridges follow: cysteine 416/cysteine 427, cysteine 423/cysteine 436, cysteine 438/cysteine 451, cysteine 520/cysteine 533, cysteine 527/cysteine 540, cysteine 542/cysteine 551, cysteine 564/cysteine 576, cysteine 570/cysteine 583, cysteine 585/cysteine 594, cysteine 607/cysteine 619, cysteine 613/cysteine 626, and cysteine 628/cysteine 637. EGF-like domains lie at 516 to 552 (FGHDCSLTCDDCRNGGTCLLGLDGCDCPEGWTGLICN), 560 to 595 (FGKNCSFSCSCQNGGTCDSVTGACRCPPGVSGTNCE), 603 to 638 (YGKHCRKKCNCANRGRCHRLYGACLCDPGLYGRFCH), 736 to 770 (FGVNCSSSCSCGGAPCHGVTGQCRCPPGRTGEDCE), 783 to 814 (QEICPACQHAARCDPETGACLCLPGFVGSRCQ), 822 to 857 (YGPSCQTRCSCANDGHCHPATGHCSCAPGWTGFSCQ), 865 to 901 (WGPDCSHPCNCSAGHGSCDAISGLCLCEAGYVGPRCE), 909 to 944 (FGPGCEQRCQCQHGAACDHVSGACTCPAGWRGTFCE), 955 to 987 (DCRSACNCTAGAACDAVNGSCLCPAGRRGPRCA), 995 to 1030 (YGHNCSQACACFNGASCDPVHGQCHCAPGWMGPSCL), 1038 to 1073 (YGDNCRHSCLCQNGGTCDPVSGHCACPEGWAGLACE), 1081 to 1116 (VRAGCRHSGGCLNGGLCDPHTGRCLCPAGWTGDKCQ), 1124 to 1159 (FGEACAQRCSCPPGAACHHVTGACRCPPGFTGSGCE), 1211 to 1246 (YGPGCEQLCGCLNGGSCDAATGACRCPTGFLGTDCN), 1254 to 1289 (FGPNCTHVCGCGQGAACDPVTGTCLCPPGRAGVRCE), 1297 to 1332 (FGVGCEHTCSCRNGGLCHASNGSCSCGLGWTGRHCE), 1345 to 1375 (HLECSCHNNSTCEPATGTCRCGPGFYGQACE), 1383 to 1418 (HGAGCQGLCWCQHGAPCDPISGRCLCPAGFHGHFCE), and 1469 to 1504 (FGPSCTLHCDCGGGADCDPVSGQCHCVDGYMGPTCR). Asparagine 739 is a glycosylation site (N-linked (GlcNAc...) asparagine). Intrachain disulfides connect cysteine 740–cysteine 751, cysteine 744–cysteine 758, cysteine 760–cysteine 769, cysteine 786–cysteine 795, cysteine 789–cysteine 802, cysteine 804–cysteine 813, cysteine 826–cysteine 838, cysteine 832–cysteine 845, cysteine 847–cysteine 856, cysteine 869–cysteine 882, cysteine 873–cysteine 889, cysteine 891–cysteine 900, cysteine 913–cysteine 925, cysteine 919–cysteine 932, and cysteine 934–cysteine 943. Disulfide bonds link cysteine 999–cysteine 1011, cysteine 1005–cysteine 1018, cysteine 1020–cysteine 1029, cysteine 1042–cysteine 1054, cysteine 1048–cysteine 1061, cysteine 1063–cysteine 1072, cysteine 1085–cysteine 1097, cysteine 1091–cysteine 1104, cysteine 1106–cysteine 1115, cysteine 1128–cysteine 1140, cysteine 1134–cysteine 1147, cysteine 1149–cysteine 1158, cysteine 1215–cysteine 1227, cysteine 1221–cysteine 1234, cysteine 1236–cysteine 1245, cysteine 1258–cysteine 1270, cysteine 1264–cysteine 1277, cysteine 1279–cysteine 1288, cysteine 1301–cysteine 1313, cysteine 1307–cysteine 1320, cysteine 1322–cysteine 1331, cysteine 1348–cysteine 1356, cysteine 1350–cysteine 1363, cysteine 1365–cysteine 1374, cysteine 1387–cysteine 1399, cysteine 1393–cysteine 1406, cysteine 1408–cysteine 1417, cysteine 1473–cysteine 1485, cysteine 1479–cysteine 1492, and cysteine 1494–cysteine 1503. The disordered stretch occupies residues 1509–1541 (LRLPENPSLAQGSAGTLPASSRPTSRSGGPARH). Over residues 1516–1535 (SLAQGSAGTLPASSRPTSRS) the composition is skewed to polar residues.

It is found in the secreted. This Homo sapiens (Human) protein is Multiple epidermal growth factor-like domains protein 6 (MEGF6).